A 369-amino-acid polypeptide reads, in one-letter code: UPF0284 protein AM1_5137 (369 aa).

Belongs to the UPF0284 family.

In Acaryochloris marina (strain MBIC 11017), this protein is UPF0284 protein AM1_5137.